Reading from the N-terminus, the 198-residue chain is Peptide methionine sulfoxide reductase MsrA 2 (198 aa).

Cysteine 32 is an active-site residue.

The protein belongs to the MsrA Met sulfoxide reductase family.

The enzyme catalyses L-methionyl-[protein] + [thioredoxin]-disulfide + H2O = L-methionyl-(S)-S-oxide-[protein] + [thioredoxin]-dithiol. It carries out the reaction [thioredoxin]-disulfide + L-methionine + H2O = L-methionine (S)-S-oxide + [thioredoxin]-dithiol. In terms of biological role, has an important function as a repair enzyme for proteins that have been inactivated by oxidation. Catalyzes the reversible oxidation-reduction of methionine sulfoxide in proteins to methionine. This is Peptide methionine sulfoxide reductase MsrA 2 (msrA2) from Rhizobium meliloti (strain 1021) (Ensifer meliloti).